Reading from the N-terminus, the 199-residue chain is Recombination protein RecR (199 aa).

The C4-type zinc-finger motif lies at 57-72; that stretch reads CQSCRTFTEQSLCPIC. Residues 81 to 176 form the Toprim domain; sequence GVICVVETPA…IISRIAHGVP (96 aa).

The protein belongs to the RecR family.

Functionally, may play a role in DNA repair. It seems to be involved in an RecBC-independent recombinational process of DNA repair. It may act with RecF and RecO. This chain is Recombination protein RecR, found in Shewanella denitrificans (strain OS217 / ATCC BAA-1090 / DSM 15013).